A 75-amino-acid chain; its full sequence is UPF0352 protein YejL (75 aa).

It belongs to the UPF0352 family.

In Escherichia coli O139:H28 (strain E24377A / ETEC), this protein is UPF0352 protein YejL.